The chain runs to 224 residues: UPF0758 protein lmo1549 (224 aa).

Residues 102–224 (VVRCPEDAVK…YISLKEKGYF (123 aa)) form the MPN domain. The Zn(2+) site is built by H173, H175, and D186. Residues 173-186 (HNHPSGDPTPSSED) carry the JAMM motif motif.

It belongs to the UPF0758 family.

This Listeria monocytogenes serovar 1/2a (strain ATCC BAA-679 / EGD-e) protein is UPF0758 protein lmo1549.